Consider the following 681-residue polypeptide: Structure-specific endonuclease subunit SLX4 (681 aa).

Disordered regions lie at residues 239–305 (EREK…QEQL) and 505–528 (EVTGEAEDGPSIIQVPSSPGNENL). Over residues 251-261 (SDSSPEPTQLL) the composition is skewed to polar residues. Residues 265–281 (IIEEEHEVDEEEEDNEN) are compositionally biased toward acidic residues. Composition is skewed to polar residues over residues 288-305 (QLASSPTQISSDDTQEQL) and 518-528 (QVPSSPGNENL).

It belongs to the SLX4 family. Forms a heterodimer with SLX1. In terms of processing, phosphorylated in response to DNA damage.

It localises to the nucleus. Its function is as follows. Regulatory subunit of the SLX1-SLX4 structure-specific endonuclease that resolves DNA secondary structures generated during DNA repair and recombination. Has endonuclease activity towards branched DNA substrates, introducing single-strand cuts in duplex DNA close to junctions with ss-DNA. The protein is Structure-specific endonuclease subunit SLX4 of Meyerozyma guilliermondii (strain ATCC 6260 / CBS 566 / DSM 6381 / JCM 1539 / NBRC 10279 / NRRL Y-324) (Yeast).